We begin with the raw amino-acid sequence, 190 residues long: Glutathione peroxidase 2 (190 aa).

Selenocysteine 40 is an active-site residue. Position 40 (selenocysteine 40) is a non-standard amino acid, selenocysteine.

This sequence belongs to the glutathione peroxidase family. Homotetramer.

The protein localises to the cytoplasm. It is found in the cytosol. The catalysed reaction is 2 glutathione + H2O2 = glutathione disulfide + 2 H2O. The enzyme catalyses a hydroperoxy polyunsaturated fatty acid + 2 glutathione = a hydroxy polyunsaturated fatty acid + glutathione disulfide + H2O. It catalyses the reaction tert-butyl hydroperoxide + 2 glutathione = tert-butanol + glutathione disulfide + H2O. It carries out the reaction cumene hydroperoxide + 2 glutathione = 2-phenylpropan-2-ol + glutathione disulfide + H2O. The catalysed reaction is (13S)-hydroperoxy-(9Z,11E)-octadecadienoate + 2 glutathione = (13S)-hydroxy-(9Z,11E)-octadecadienoate + glutathione disulfide + H2O. The enzyme catalyses (5S)-hydroperoxy-(6E,8Z,11Z,14Z)-eicosatetraenoate + 2 glutathione = (5S)-hydroxy-(6E,8Z,11Z,14Z)-eicosatetraenoate + glutathione disulfide + H2O. It catalyses the reaction (12R)-hydroperoxy-(5Z,8Z,10E,14Z)-eicosatetraenoate + 2 glutathione = (12R)-hydroxy-(5Z,8Z,10E,14Z)-eicosatetraenoate + glutathione disulfide + H2O. It carries out the reaction (15S)-hydroperoxy-(5Z,8Z,11Z,13E)-eicosatetraenoate + 2 glutathione = (15S)-hydroxy-(5Z,8Z,11Z,13E)-eicosatetraenoate + glutathione disulfide + H2O. Catalyzes the reduction of hydroperoxides in a glutathione-dependent manner thus regulating cellular redox homeostasis. Can reduce small soluble hydroperoxides such as H2O2, cumene hydroperoxide and tert-butyl hydroperoxide, as well as several fatty acid-derived hydroperoxides. Cannot reduce phosphatidycholine hydroperoxide. This chain is Glutathione peroxidase 2 (Gpx2), found in Mus musculus (Mouse).